A 1137-amino-acid polypeptide reads, in one-letter code: MSQGPRTCSLLLVLLLSHGGAYQREPSPRQDLHPLLQKMAEEIIEGSYLNALLDLTLFERSHVWTADLSHRVLAYLNSKNVAFTIPSLQAVMEAHLEQYLYQPQKLLEDLRATDNQQFHTAMKCLLEDKWGHLDLEDVVINLGDIRDEALQSPGVNRSLFLITLERCFQVLNALECVEVLGRVLRGSSGSFLQPDITERLPQDLHEDAFKNLSAVFKDLYDQTSAHTQRALYSWMTGILRTPFNVTDGSVSWVSAEKLWILGRYMVHLSFEEIMNISPIEIGLFISYDNATKQLDMVYDITPELAQAFLERIRCSSFDVRNISTIHRLGLLVCFYDGLELLDATLAQVLLHQMLKCSRLRGFQAGVQKLKANLLDIATENQTLNETLGSLSDAVVGLTSSQLESLSSDAVHSAISTLNQVTGWGRSQIVILSAKYLAQEKVLSFYNVCQMGVLLAGVGTQAFYSMDHKDLWQVLRSPLSQDMSDLSPVQQQGVLGKLMEAEDATSGIAEVPRALFKEVSLYDLWKESRFNATVLKAKELRRSQALFLYEFLGKTTERPEELLSAGQLVKGVPCSHIDAMSDHLFLALFQYFDNNFSLLSPDQVNCLAWKYWEVSRSSMPPFLLATLPSRFLSSIPPSRCVRFLISLGKRRLETLVLDSDKRSVVVRKVQQCLDGVIADEYTVDIVGHLLCHLPASFIERGISPRAWAAALHGLRSCTALSSEQKAAVRVRLLEQWGPPENWTAETTKDLAPFLAFFSGDELHTVATKFPEILQQTASKMVGVLLPKEFLWAVFESVQNSSNESPSFDPTFGCHGVVTPSSDDIFKLAEANACWDPEVLLCMEEDTFIRNVELLGAVKGFSRAQLMALKEKAIQVWDLPSRWKEHHIVSLGRIALALSESELEQLDLSSIDTVASLGQQTEWTPGQAKSILQAFLEDSGYGIQDLKSFHLVGFGPTLCAMDPTEIQLIKTSEFRAVVARIGTLFCSTPVLAGFKKKAEVVFGRPTEWTSSILQELGTIAAGITKAELRMLNKELMTYFQPSAIRCLPGEVFKELSTEQIASLGPQNAASVTHSQRLQLSSAQLQSLQRALDGAKTHSWQTDPLSSSPTWPASTGSPTGEPASQALWLGCTLLLLTAKS.

The signal sequence occupies residues 1–23 (MSQGPRTCSLLLVLLLSHGGAYQ). Residues asparagine 156, asparagine 211, asparagine 244, asparagine 289, asparagine 321, asparagine 380, asparagine 384, asparagine 530, asparagine 594, asparagine 740, and asparagine 798 are each glycosylated (N-linked (GlcNAc...) asparagine). Positions 1095–1115 (HSWQTDPLSSSPTWPASTGSP) are enriched in polar residues. A disordered region spans residues 1095–1119 (HSWQTDPLSSSPTWPASTGSPTGEP). A lipid anchor (GPI-anchor amidated glycine) is attached at glycine 1113. The propeptide at 1114–1137 (SPTGEPASQALWLGCTLLLLTAKS) is removed in mature form.

It belongs to the stereocilin family. As to expression, expressed in the inner ear and vestibule.

The protein localises to the apical cell membrane. The protein resides in the secreted. It localises to the extracellular space. Its subcellular location is the extracellular matrix. In terms of biological role, may act as an adhesion molecule. In Mus musculus (Mouse), this protein is Otoancorin (Otoa).